A 338-amino-acid chain; its full sequence is Glycerol-3-phosphate dehydrogenase [NAD(P)+] (338 aa).

The NADPH site is built by S14, Y15, H35, and K109. Positions 109, 138, and 140 each coordinate sn-glycerol 3-phosphate. A142 is an NADPH binding site. Residues K194, D247, S257, R258, and N259 each contribute to the sn-glycerol 3-phosphate site. K194 serves as the catalytic Proton acceptor. R258 lines the NADPH pocket. Residues V282 and E284 each contribute to the NADPH site.

It belongs to the NAD-dependent glycerol-3-phosphate dehydrogenase family.

It is found in the cytoplasm. The enzyme catalyses sn-glycerol 3-phosphate + NAD(+) = dihydroxyacetone phosphate + NADH + H(+). It carries out the reaction sn-glycerol 3-phosphate + NADP(+) = dihydroxyacetone phosphate + NADPH + H(+). It participates in membrane lipid metabolism; glycerophospholipid metabolism. Its function is as follows. Catalyzes the reduction of the glycolytic intermediate dihydroxyacetone phosphate (DHAP) to sn-glycerol 3-phosphate (G3P), the key precursor for phospholipid synthesis. The protein is Glycerol-3-phosphate dehydrogenase [NAD(P)+] of Shewanella oneidensis (strain ATCC 700550 / JCM 31522 / CIP 106686 / LMG 19005 / NCIMB 14063 / MR-1).